The sequence spans 184 residues: Ribosome-recycling factor (184 aa).

Positions 141 to 165 (DEKNGDITEDDLRSQTDDVQKATDN) are disordered.

Belongs to the RRF family.

It is found in the cytoplasm. Functionally, responsible for the release of ribosomes from messenger RNA at the termination of protein biosynthesis. May increase the efficiency of translation by recycling ribosomes from one round of translation to another. This is Ribosome-recycling factor from Staphylococcus epidermidis (strain ATCC 35984 / DSM 28319 / BCRC 17069 / CCUG 31568 / BM 3577 / RP62A).